The following is a 364-amino-acid chain: UDP-N-acetylglucosamine--N-acetylmuramyl-(pentapeptide) pyrophosphoryl-undecaprenol N-acetylglucosamine transferase 1 (364 aa).

UDP-N-acetyl-alpha-D-glucosamine contacts are provided by residues 10-12, Asn124, Ser195, Ile250, and Gln295; that span reads TGG.

This sequence belongs to the glycosyltransferase 28 family. MurG subfamily.

It is found in the cell membrane. The enzyme catalyses di-trans,octa-cis-undecaprenyl diphospho-N-acetyl-alpha-D-muramoyl-L-alanyl-D-glutamyl-meso-2,6-diaminopimeloyl-D-alanyl-D-alanine + UDP-N-acetyl-alpha-D-glucosamine = di-trans,octa-cis-undecaprenyl diphospho-[N-acetyl-alpha-D-glucosaminyl-(1-&gt;4)]-N-acetyl-alpha-D-muramoyl-L-alanyl-D-glutamyl-meso-2,6-diaminopimeloyl-D-alanyl-D-alanine + UDP + H(+). The protein operates within cell wall biogenesis; peptidoglycan biosynthesis. Functionally, cell wall formation. Catalyzes the transfer of a GlcNAc subunit on undecaprenyl-pyrophosphoryl-MurNAc-pentapeptide (lipid intermediate I) to form undecaprenyl-pyrophosphoryl-MurNAc-(pentapeptide)GlcNAc (lipid intermediate II). This chain is UDP-N-acetylglucosamine--N-acetylmuramyl-(pentapeptide) pyrophosphoryl-undecaprenol N-acetylglucosamine transferase 1, found in Bacillus anthracis.